Here is a 639-residue protein sequence, read N- to C-terminus: tRNA 5-methylaminomethyl-2-thiouridine biosynthesis bifunctional protein MnmC (639 aa).

A tRNA (mnm(5)s(2)U34)-methyltransferase region spans residues 1-228 (MSEPIEWLED…KRDNLQATYA (228 aa)). Residues 254-639 (VGAGLAGAAV…SERWLGYEPQ (386 aa)) are FAD-dependent cmnm(5)s(2)U34 oxidoreductase.

This sequence in the N-terminal section; belongs to the methyltransferase superfamily. tRNA (mnm(5)s(2)U34)-methyltransferase family. The protein in the C-terminal section; belongs to the DAO family. The cofactor is FAD.

The protein resides in the cytoplasm. It carries out the reaction 5-aminomethyl-2-thiouridine(34) in tRNA + S-adenosyl-L-methionine = 5-methylaminomethyl-2-thiouridine(34) in tRNA + S-adenosyl-L-homocysteine + H(+). Catalyzes the last two steps in the biosynthesis of 5-methylaminomethyl-2-thiouridine (mnm(5)s(2)U) at the wobble position (U34) in tRNA. Catalyzes the FAD-dependent demodification of cmnm(5)s(2)U34 to nm(5)s(2)U34, followed by the transfer of a methyl group from S-adenosyl-L-methionine to nm(5)s(2)U34, to form mnm(5)s(2)U34. This chain is tRNA 5-methylaminomethyl-2-thiouridine biosynthesis bifunctional protein MnmC, found in Acidovorax sp. (strain JS42).